The following is a 660-amino-acid chain: Solute carrier family 5 member 4B (660 aa).

Topologically, residues 1 to 27 are cytoplasmic; the sequence is MASTLSPSITPQTEEPPVVPVRIQNAA. The chain crosses the membrane as a helical span at residues 28–48; it reads DISVIVIYFIVVLAVGLWSMV. At 49–54 the chain is on the extracellular side; that stretch reads RSNRGT. Residues 55 to 75 traverse the membrane as a helical segment; that stretch reads VGGFFLAGHDMAWWPMGASLF. Over 76 to 82 the chain is Cytoplasmic; the sequence is ASNIGSN. Residues 83-103 form a helical membrane-spanning segment; sequence HFVGLAGTGAASGIAIAAVEW. Topologically, residues 104-105 are extracellular; it reads NA. Residues 106-126 form a helical membrane-spanning segment; sequence LLMVLVLGWVFLPIYIKAGVL. The Cytoplasmic portion of the chain corresponds to 127–142; the sequence is TMPEYLRKRFGGKRLQ. Residues 143-163 traverse the membrane as a helical segment; sequence IYLSVLSLFIMVALQTSSIIF. Residues 164-166 lie on the Extracellular side of the membrane; that stretch reads SGA. The helical transmembrane segment at 167–187 threads the bilayer; that stretch reads IFIQLALGLNLYLAVFILLAI. At 188–208 the chain is on the cytoplasmic side; sequence TAFYTVAGGLASVIYTDSVQT. The helical transmembrane segment at 209 to 229 threads the bilayer; it reads FIMLLGSLILMGFAFAEVGGY. Topologically, residues 230-277 are extracellular; sequence ESFTEKYMNAIPSVVEGDNLTISPKCYTPQPDSFHVFRDPVTGDIPWP. Residues 278 to 298 form a helical membrane-spanning segment; sequence GLIFGMTILAIWYWCADQVIV. Residues 299–313 are Cytoplasmic-facing; that stretch reads QRCLCGKNMSHVKAA. The chain crosses the membrane as a helical span at residues 314-334; the sequence is CILCGYLKLLPMFLMVMPGMI. The Extracellular segment spans residues 335–380; that stretch reads SRILYTDKVACVVPSECEKQCGTAVGCTNYAYPTLVLELMPDGLRG. The helical transmembrane segment at 381–401 threads the bilayer; sequence LMLSVMLASLMSSLTSIFNSA. Over 402-423 the chain is Cytoplasmic; it reads STLFTIDLYTKIRKKASERELM. The chain crosses the membrane as a helical span at residues 424–444; that stretch reads IAGRIFGMVLIAVSILWVPLV. Over 445 to 455 the chain is Extracellular; that stretch reads QVSQNGQLFHY. Residues 456–476 traverse the membrane as a helical segment; the sequence is IGSVSSYLGPPLGAVFMLAIF. Over 477 to 484 the chain is Cytoplasmic; the sequence is FKRVNEQG. The helical transmembrane segment at 485–505 threads the bilayer; that stretch reads AFWGLMVGLVVGLIRLIAEFV. Residues 506-526 lie on the Extracellular side of the membrane; the sequence is YGTGSCVAPSNCPKIICGVHY. The helical transmembrane segment at 527-547 threads the bilayer; sequence MYFAIILFFVSIIVILGVSFL. At 548 to 639 the chain is on the cytoplasmic side; it reads TEPIPDVHLY…DTSEKPLWRT (92 aa). The chain crosses the membrane as a helical span at residues 640–660; that stretch reads VMNINAVLLLGVAVFVHAYFA.

Belongs to the sodium:solute symporter (SSF) (TC 2.A.21) family. As to expression, expressed in small intestine. Expressed in kidney.

It is found in the cell membrane. The enzyme catalyses D-glucose(out) + 2 Na(+)(out) = D-glucose(in) + 2 Na(+)(in). With respect to regulation, inhibited by phlorizin. Low-affinity sodium/D-glucose symporter. Generates D-glucose-induced depolarization in a pH-independent manner. In Mus musculus (Mouse), this protein is Solute carrier family 5 member 4B.